Here is a 392-residue protein sequence, read N- to C-terminus: 1-deoxy-D-xylulose 5-phosphate reductoisomerase (392 aa).

NADPH-binding residues include threonine 14, glycine 15, serine 16, isoleucine 17, glycine 40, glutamine 43, and asparagine 126. Lysine 127 is a 1-deoxy-D-xylulose 5-phosphate binding site. Residue glutamate 128 participates in NADPH binding. Aspartate 150 provides a ligand contact to Mn(2+). Residues serine 151, glutamate 152, serine 176, and histidine 199 each coordinate 1-deoxy-D-xylulose 5-phosphate. Residue glutamate 152 participates in Mn(2+) binding. Glycine 205 serves as a coordination point for NADPH. 4 residues coordinate 1-deoxy-D-xylulose 5-phosphate: serine 212, asparagine 217, lysine 218, and glutamate 221. Mn(2+) is bound at residue glutamate 221.

The protein belongs to the DXR family. Mg(2+) is required as a cofactor. It depends on Mn(2+) as a cofactor.

It catalyses the reaction 2-C-methyl-D-erythritol 4-phosphate + NADP(+) = 1-deoxy-D-xylulose 5-phosphate + NADPH + H(+). Its pathway is isoprenoid biosynthesis; isopentenyl diphosphate biosynthesis via DXP pathway; isopentenyl diphosphate from 1-deoxy-D-xylulose 5-phosphate: step 1/6. Functionally, catalyzes the NADPH-dependent rearrangement and reduction of 1-deoxy-D-xylulose-5-phosphate (DXP) to 2-C-methyl-D-erythritol 4-phosphate (MEP). This chain is 1-deoxy-D-xylulose 5-phosphate reductoisomerase, found in Corynebacterium glutamicum (strain ATCC 13032 / DSM 20300 / JCM 1318 / BCRC 11384 / CCUG 27702 / LMG 3730 / NBRC 12168 / NCIMB 10025 / NRRL B-2784 / 534).